A 195-amino-acid chain; its full sequence is Large ribosomal subunit protein bL25 (195 aa).

It belongs to the bacterial ribosomal protein bL25 family. CTC subfamily. In terms of assembly, part of the 50S ribosomal subunit; part of the 5S rRNA/L5/L18/L25 subcomplex. Contacts the 5S rRNA. Binds to the 5S rRNA independently of L5 and L18.

Its function is as follows. This is one of the proteins that binds to the 5S RNA in the ribosome where it forms part of the central protuberance. The protein is Large ribosomal subunit protein bL25 of Chlorobium chlorochromatii (strain CaD3).